A 274-amino-acid chain; its full sequence is MRSNNNNPLTRDEILSRYFPQYRPAVATSQGLSGGSCIIAHDTHRVVLRRHHDPDAPPAHFLRHYRALSQLPASLAPRALFYTPGWMAVEYLHGVVNSALPDADELAALLYHLHQQPRFGWRIALSPLLAQYWSCCDPARRTPFWLRRLKQLQKNGEPRPLRLAPLHMDVHGDNIVLTSAGLRLIDWEYAGDGDIALELAAVWVEDERQHRQLADAYAARARIDARQLWRQIRLWHPWVIMLKAGWFEYRWRQTGEQQFIRLADETWRQLRMKG.

This sequence belongs to the thiamine kinase family.

The enzyme catalyses thiamine + ATP = thiamine phosphate + ADP + H(+). It participates in cofactor biosynthesis; thiamine diphosphate biosynthesis; thiamine phosphate from thiamine: step 1/1. Catalyzes the ATP-dependent phosphorylation of thiamine to thiamine phosphate. Is involved in thiamine salvage. In Salmonella typhimurium (strain LT2 / SGSC1412 / ATCC 700720), this protein is Thiamine kinase.